Consider the following 481-residue polypeptide: Glutamate--tRNA ligase (481 aa).

Residues Pro9–Thr19 carry the 'HIGH' region motif. A 'KMSKS' region motif is present at residues Lys247–Arg251. Residue Lys250 coordinates ATP.

Belongs to the class-I aminoacyl-tRNA synthetase family. Glutamate--tRNA ligase type 1 subfamily. Monomer.

Its subcellular location is the cytoplasm. It catalyses the reaction tRNA(Glu) + L-glutamate + ATP = L-glutamyl-tRNA(Glu) + AMP + diphosphate. Its function is as follows. Catalyzes the attachment of glutamate to tRNA(Glu) in a two-step reaction: glutamate is first activated by ATP to form Glu-AMP and then transferred to the acceptor end of tRNA(Glu). The sequence is that of Glutamate--tRNA ligase from Trichormus variabilis (strain ATCC 29413 / PCC 7937) (Anabaena variabilis).